A 452-amino-acid chain; its full sequence is FAD-linked oxidoreductase DDB_G0289697 (452 aa).

The FAD-binding PCMH-type domain occupies 44–212 (VVNTPLLIVY…TDFTFKLHPV (169 aa)). His-81 carries the post-translational modification Pros-8alpha-FAD histidine.

This sequence belongs to the oxygen-dependent FAD-linked oxidoreductase family. FAD serves as cofactor.

The sequence is that of FAD-linked oxidoreductase DDB_G0289697 from Dictyostelium discoideum (Social amoeba).